The chain runs to 401 residues: Multidrug resistance protein MdtH (401 aa).

11 helical membrane passes run 13-33 (YFLL…FPLI), 34-54 (SIHF…ALGL), 78-95 (MIVT…FIAL), 99-116 (PWIL…GTLF), 139-159 (LLLM…SWLL), 165-185 (FVCW…ALFL), 214-234 (VLTL…FPII), 243-263 (AAVK…LYPI), 289-309 (FPVG…LFYL), 340-360 (LGLA…YDTG), and 365-385 (IPQL…YALH).

Belongs to the major facilitator superfamily. DHA1 family. MdtH (TC 2.A.1.2.21) subfamily.

The protein localises to the cell inner membrane. This chain is Multidrug resistance protein MdtH, found in Photorhabdus laumondii subsp. laumondii (strain DSM 15139 / CIP 105565 / TT01) (Photorhabdus luminescens subsp. laumondii).